The primary structure comprises 590 residues: Probable metalloendopeptidase G1-type (590 aa).

Histidine 41 lines the Zn(2+) pocket. Residue glutamate 44 is part of the active site. Residue histidine 45 coordinates Zn(2+).

The protein belongs to the peptidase M44 family. Zn(2+) serves as cofactor.

Seems to be involved in viral proteins maturation by cleavage at Ala-Gly-|-Xaa motifs. The protein is Probable metalloendopeptidase G1-type (GP045L) of Oryctolagus cuniculus (Rabbit).